Here is a 416-residue protein sequence, read N- to C-terminus: Serine hydroxymethyltransferase (416 aa).

(6S)-5,6,7,8-tetrahydrofolate is bound by residues Leu-121 and 125 to 127; that span reads GHL. Lys-230 carries the N6-(pyridoxal phosphate)lysine modification.

This sequence belongs to the SHMT family. In terms of assembly, homodimer. Pyridoxal 5'-phosphate serves as cofactor.

The protein localises to the cytoplasm. It catalyses the reaction (6R)-5,10-methylene-5,6,7,8-tetrahydrofolate + glycine + H2O = (6S)-5,6,7,8-tetrahydrofolate + L-serine. It participates in one-carbon metabolism; tetrahydrofolate interconversion. The protein operates within amino-acid biosynthesis; glycine biosynthesis; glycine from L-serine: step 1/1. In terms of biological role, catalyzes the reversible interconversion of serine and glycine with tetrahydrofolate (THF) serving as the one-carbon carrier. This reaction serves as the major source of one-carbon groups required for the biosynthesis of purines, thymidylate, methionine, and other important biomolecules. Also exhibits THF-independent aldolase activity toward beta-hydroxyamino acids, producing glycine and aldehydes, via a retro-aldol mechanism. The sequence is that of Serine hydroxymethyltransferase from Nitrosomonas eutropha (strain DSM 101675 / C91 / Nm57).